The sequence spans 146 residues: MNSLSIFFIVVATAAVCLLFIQSYSIYENYGNIKEFNATHAAFEYSKSIGGTPALDRRVQDVNDTISDVKQKWRCVVYPGNGFVSASIFGFQAEVGPNNTRSIRKFNTMRQCIDFTFSDVINIDIYNPCIAPNINNTECQFLKSVL.

Residues Met1–Ile21 traverse the membrane as a helical; Signal-anchor for type II membrane protein segment. Residues Gln22–Leu146 lie on the Virion surface side of the membrane.

Belongs to the orthopoxvirus OPG155 protein family. In terms of assembly, part of a stable entry-fusion complex (EFC) which is at least composed of proteins OPG143, OPG147, OPG155, OPG086, OPG094, OPG107, OPG104, and OPG099. Formation of the viral membrane is necessary for the assembly of the complex. Interacts directly with protein OPG107. In terms of processing, contains two intramolecular disulfide bonds. They are created by the viral disulfide bond formation pathway, a poxvirus-specific pathway that operates on the cytoplasmic side of the MV membranes.

The protein resides in the virion membrane. Its function is as follows. Envelope protein required for virus entry into host cell and for cell-cell fusion (syncytium formation). The protein is Envelope protein OPG155 (OPG155) of Monkeypox virus (strain Zaire-96-I-16) (MPX).